The following is a 524-amino-acid chain: GMP synthase [glutamine-hydrolyzing] (524 aa).

A Glutamine amidotransferase type-1 domain is found at 9-207; the sequence is RILILDFSSQ…VIHICQCIPN (199 aa). The Nucleophile role is filled by Cys-86. Residues His-181 and Glu-183 contribute to the active site. Residues 208-399 form the GMPS ATP-PPase domain; it reads WTTKHIIEDS…LGLPADLIYR (192 aa). Residue 235–241 participates in ATP binding; that stretch reads SGGVDSA.

As to quaternary structure, homodimer.

The enzyme catalyses XMP + L-glutamine + ATP + H2O = GMP + L-glutamate + AMP + diphosphate + 2 H(+). It functions in the pathway purine metabolism; GMP biosynthesis; GMP from XMP (L-Gln route): step 1/1. Catalyzes the synthesis of GMP from XMP. This is GMP synthase [glutamine-hydrolyzing] from Coxiella burnetii (strain Dugway 5J108-111).